The following is a 590-amino-acid chain: Arginine--tRNA ligase (590 aa).

The 'HIGH' region motif lies at 131-141; the sequence is PNIAKEMHVGH.

This sequence belongs to the class-I aminoacyl-tRNA synthetase family. In terms of assembly, monomer.

The protein localises to the cytoplasm. The enzyme catalyses tRNA(Arg) + L-arginine + ATP = L-arginyl-tRNA(Arg) + AMP + diphosphate. This Synechococcus sp. (strain RCC307) protein is Arginine--tRNA ligase.